The following is a 405-amino-acid chain: MANIVVKRLERTPIDETPVEIVERKGIGHPDSICDGVAESVSVALCKMYKEKMGVVLHHNTDQVELVGGYAYPELGGGCMVSPIYILLSGRATMEVLDKESGKIIKLPVNTTAVNAARDYLKKALRNMDLEKDVVVDCRIGQGSVDLVEVFDRKRSEIPHANDTSFGVGHAPLSTTEKIVLETEKLLNSDALKAEIPAVGEDIKVMGLREGKKITLTIAMAAVDKYVNSCADYVKVKELAKAKVEENAKKYLDGHELEVCINTADDDEDCIFLTVTGTSAEMGDDGSVGRGNRANGLITPFRPMSMEATSGKNPINHIGKIYNILSNIIAEDVAKIEGVRECQIRILSQIGKPITEPKILDIEMIPENGFELEDLSPKAKEIAQKWLDNITEVTERIVSGNVTTF.

141–146 (GQGSVD) serves as a coordination point for ATP.

It belongs to the AdoMet synthase 2 family. It depends on Mg(2+) as a cofactor.

It catalyses the reaction L-methionine + ATP + H2O = S-adenosyl-L-methionine + phosphate + diphosphate. Its pathway is amino-acid biosynthesis; S-adenosyl-L-methionine biosynthesis; S-adenosyl-L-methionine from L-methionine: step 1/1. Catalyzes the formation of S-adenosylmethionine from methionine and ATP. The chain is S-adenosylmethionine synthase from Methanococcus maripaludis (strain C7 / ATCC BAA-1331).